Consider the following 710-residue polypeptide: Methionine--tRNA ligase (710 aa).

The short motif at 16 to 26 is the 'HIGH' region element; it reads PYANGAFHIGH. Zn(2+)-binding residues include Cys-147, Cys-150, Cys-160, and Cys-163. Residues 350–354 carry the 'KMSKS' region motif; that stretch reads KMSKS. Lys-353 provides a ligand contact to ATP. Residues 604–710 enclose the tRNA-binding domain; it reads DFAKIDLRIA…PGAEPGMRVG (107 aa).

The protein belongs to the class-I aminoacyl-tRNA synthetase family. MetG type 1 subfamily. As to quaternary structure, homodimer. Zn(2+) is required as a cofactor.

It localises to the cytoplasm. The catalysed reaction is tRNA(Met) + L-methionine + ATP = L-methionyl-tRNA(Met) + AMP + diphosphate. Its function is as follows. Is required not only for elongation of protein synthesis but also for the initiation of all mRNA translation through initiator tRNA(fMet) aminoacylation. The polypeptide is Methionine--tRNA ligase (Herminiimonas arsenicoxydans).